The chain runs to 172 residues: Peptidyl-prolyl cis-trans isomerase (172 aa).

The PPIase cyclophilin-type domain occupies 7–170; the sequence is FFDMAIAGNP…RPVTIADCGQ (164 aa).

Belongs to the cyclophilin-type PPIase family. As to expression, expressed in meristematic tissues, with higher levels in nodules.

It localises to the cytoplasm. It carries out the reaction [protein]-peptidylproline (omega=180) = [protein]-peptidylproline (omega=0). With respect to regulation, binds cyclosporin A (CsA). CsA mediates some of its effects via an inhibitory action on PPIase. PPIases accelerate the folding of proteins. It catalyzes the cis-trans isomerization of proline imidic peptide bonds in oligopeptides. In Lupinus luteus (European yellow lupine), this protein is Peptidyl-prolyl cis-trans isomerase.